The following is a 312-amino-acid chain: MNNFYIKCLKSKKVESGSIYGQFVIKSLHPGQGITIGNLFRRVLLSDLGGTAITGVRIAGVRDEFSTIPGIREDILEILLNLKGIVLKSKTNDLKFGRLKIKGPAVVTANCIQLPSEVEIVNPNHYIATITTSNVLEIEFKIESGTGYKLAGQTFCKKSQDYLQIDAIFMPVQKVDFKIENIYDNSNDLTERLFLDIWTNGSMSPEEAVSSASRFIISFFSSLLENKLPQETKESENKTLSAPKNPHTNIAIEELHLSVRAYNCLKRAQINTIGDLLKYSPEKLQELKNFGRKSADEVFTTLKNKLGIVLSN.

The interval 1–227 (MNNFYIKCLK…SFFSSLLENK (227 aa)) is alpha N-terminal domain (alpha-NTD). The interval 243 to 312 (PKNPHTNIAI…KNKLGIVLSN (70 aa)) is alpha C-terminal domain (alpha-CTD).

The protein belongs to the RNA polymerase alpha chain family. As to quaternary structure, in plastids the minimal PEP RNA polymerase catalytic core is composed of four subunits: alpha, beta, beta', and beta''. When a (nuclear-encoded) sigma factor is associated with the core the holoenzyme is formed, which can initiate transcription.

The protein resides in the plastid. It is found in the chloroplast. It catalyses the reaction RNA(n) + a ribonucleoside 5'-triphosphate = RNA(n+1) + diphosphate. Functionally, DNA-dependent RNA polymerase catalyzes the transcription of DNA into RNA using the four ribonucleoside triphosphates as substrates. This chain is DNA-directed RNA polymerase subunit alpha, found in Trieres chinensis (Marine centric diatom).